Consider the following 602-residue polypeptide: Elongation factor 4 (602 aa).

The 183-residue stretch at 7–189 (KRVRNFSIIA…AVVEKVPYPK (183 aa)) folds into the tr-type G domain. GTP-binding positions include 19 to 24 (DHGKST) and 136 to 139 (NKID).

Belongs to the TRAFAC class translation factor GTPase superfamily. Classic translation factor GTPase family. LepA subfamily.

Its subcellular location is the cell membrane. It catalyses the reaction GTP + H2O = GDP + phosphate + H(+). Required for accurate and efficient protein synthesis under certain stress conditions. May act as a fidelity factor of the translation reaction, by catalyzing a one-codon backward translocation of tRNAs on improperly translocated ribosomes. Back-translocation proceeds from a post-translocation (POST) complex to a pre-translocation (PRE) complex, thus giving elongation factor G a second chance to translocate the tRNAs correctly. Binds to ribosomes in a GTP-dependent manner. The chain is Elongation factor 4 from Clostridium tetani (strain Massachusetts / E88).